The sequence spans 604 residues: Deuterosome assembly protein 1 (604 aa).

Coiled coils occupy residues 14-59 (CEAE…NAQT), 85-197 (MTQN…GKKQ), 226-278 (IIEK…ELQS), and 336-399 (QDQP…KQLK). Position 547 is a phosphoserine (serine 547). Residues 558-601 (AAQHFLLEEEKRAKELEKLLNTHIDELQRHTEFTLNKYSKLKQN) are a coiled coil.

This sequence belongs to the CEP63 family. Interacts with CEP152; the interaction is mutually exclusive with CEP63.

Its subcellular location is the cytoplasm. In terms of biological role, key structural component of the deuterosome, a structure that promotes de novo centriole amplification in multiciliated cells. Deuterosome-mediated centriole amplification occurs in terminally differentiated multiciliated cells and can generate more than 100 centrioles. Probably sufficient for the specification and formation of the deuterosome inner core. Interacts with CEP152 and recruits PLK4 to activate centriole biogenesis. The protein is Deuterosome assembly protein 1 of Homo sapiens (Human).